We begin with the raw amino-acid sequence, 101 residues long: Apolipoprotein C-II (101 aa).

The first 22 residues, 1–22 (MGTRYLLVLLLVLLVLGFEVQG), serve as a signal peptide directing secretion. The lipid binding stretch occupies residues 66–74 (TMDEKIRDI). The tract at residues 78 to 101 (STAAVSTYAGIFTDQLLSMLKGDS) is lipoprotein lipase cofactor.

This sequence belongs to the apolipoprotein C2 family. Post-translationally, proapolipoprotein C-II is synthesized as a sialic acid containing glycoprotein which is subsequently desialylated prior to its proteolytic processing. Proapolipoprotein C-II, the major form found in plasma undergoes proteolytic cleavage of its N-terminal hexapeptide to generate apolipoprotein C-II, which occurs as the minor form in plasma. As to expression, highly expressed in the liver. Moderately expressed in the ileum, jejunum and ovary.

The protein resides in the secreted. In terms of biological role, component of chylomicrons, very low-density lipoproteins (VLDL), low-density lipoproteins (LDL), and high-density lipoproteins (HDL) in plasma. Plays an important role in lipoprotein metabolism as an activator of lipoprotein lipase. Both proapolipoprotein C-II and apolipoprotein C-II can activate lipoprotein lipase. The chain is Apolipoprotein C-II (APOC2) from Canis lupus familiaris (Dog).